The following is a 227-amino-acid chain: PKHD-type hydroxylase BamMC406_4714 (227 aa).

A Fe2OG dioxygenase domain is found at 78–178; the sequence is KVFPPLFNRY…RVASFFWIQS (101 aa). Residues H96, D98, and H159 each coordinate Fe cation. 2-oxoglutarate is bound at residue R169.

The cofactor is Fe(2+). L-ascorbate serves as cofactor.

The chain is PKHD-type hydroxylase BamMC406_4714 from Burkholderia ambifaria (strain MC40-6).